The chain runs to 130 residues: Riboflavin kinase (130 aa).

Residue 10 to 15 (GFGEGK) coordinates CDP. 2 residues coordinate Mg(2+): T39 and N41. Residues T96 and E104 each contribute to the FMN site. 109-112 (VNLR) contacts CDP.

It belongs to the archaeal riboflavin kinase family. The cofactor is Mg(2+).

It catalyses the reaction riboflavin + CTP = CDP + FMN + H(+). Its pathway is cofactor biosynthesis; FMN biosynthesis; FMN from riboflavin (CTP route): step 1/1. Functionally, catalyzes the CTP-dependent phosphorylation of riboflavin (vitamin B2) to form flavin mononucleotide (FMN). This Methanococcus vannielii (strain ATCC 35089 / DSM 1224 / JCM 13029 / OCM 148 / SB) protein is Riboflavin kinase.